A 150-amino-acid chain; its full sequence is Cell division protein SepF (150 aa).

The protein belongs to the SepF family. As to quaternary structure, homodimer. Interacts with FtsZ.

It localises to the cytoplasm. Its function is as follows. Cell division protein that is part of the divisome complex and is recruited early to the Z-ring. Probably stimulates Z-ring formation, perhaps through the cross-linking of FtsZ protofilaments. Its function overlaps with FtsA. This Clostridium beijerinckii (strain ATCC 51743 / NCIMB 8052) (Clostridium acetobutylicum) protein is Cell division protein SepF.